Here is a 616-residue protein sequence, read N- to C-terminus: Chaperone protein HscA (616 aa).

Belongs to the heat shock protein 70 family.

Functionally, chaperone involved in the maturation of iron-sulfur cluster-containing proteins. Has a low intrinsic ATPase activity which is markedly stimulated by HscB. Involved in the maturation of IscU. The sequence is that of Chaperone protein HscA from Escherichia coli O45:K1 (strain S88 / ExPEC).